The chain runs to 274 residues: Dermonecrotic toxin SdSicTox-betaIIB1bix (274 aa).

H5 is a catalytic residue. Mg(2+) contacts are provided by E25 and D27. Catalysis depends on H41, which acts as the Nucleophile. 2 disulfide bridges follow: C45-C51 and C47-C190. D85 is a Mg(2+) binding site.

Belongs to the arthropod phospholipase D family. Class II subfamily. Mg(2+) is required as a cofactor. Expressed by the venom gland.

It is found in the secreted. The catalysed reaction is an N-(acyl)-sphingosylphosphocholine = an N-(acyl)-sphingosyl-1,3-cyclic phosphate + choline. It catalyses the reaction an N-(acyl)-sphingosylphosphoethanolamine = an N-(acyl)-sphingosyl-1,3-cyclic phosphate + ethanolamine. The enzyme catalyses a 1-acyl-sn-glycero-3-phosphocholine = a 1-acyl-sn-glycero-2,3-cyclic phosphate + choline. It carries out the reaction a 1-acyl-sn-glycero-3-phosphoethanolamine = a 1-acyl-sn-glycero-2,3-cyclic phosphate + ethanolamine. Its function is as follows. Dermonecrotic toxins cleave the phosphodiester linkage between the phosphate and headgroup of certain phospholipids (sphingolipid and lysolipid substrates), forming an alcohol (often choline) and a cyclic phosphate. This toxin acts on sphingomyelin (SM). It may also act on ceramide phosphoethanolamine (CPE), lysophosphatidylcholine (LPC) and lysophosphatidylethanolamine (LPE), but not on lysophosphatidylserine (LPS), and lysophosphatidylglycerol (LPG). It acts by transphosphatidylation, releasing exclusively cyclic phosphate products as second products. Induces dermonecrosis, hemolysis, increased vascular permeability, edema, inflammatory response, and platelet aggregation. In Sicarius cf. damarensis (strain GJB-2008) (Six-eyed sand spider), this protein is Dermonecrotic toxin SdSicTox-betaIIB1bix.